A 456-amino-acid chain; its full sequence is Glycerol-3-phosphate acyltransferase 4 (456 aa).

The N-terminal stretch at 1-37 (MFLLLPFDSLIVNLLGISLTVLFTLLLVFIIVPAIFG) is a signal peptide. Transmembrane regions (helical) follow at residues 156–176 (ISLR…CFLL) and 180–200 (IALA…VGYL). Residue Asn247 is glycosylated (N-linked (GlcNAc...) asparagine). Residues 248-253 (HTSPID) carry the HXXXXD motif motif. 3 N-linked (GlcNAc...) asparagine glycosylation sites follow: Asn327, Asn328, and Asn362.

The protein belongs to the 1-acyl-sn-glycerol-3-phosphate acyltransferase family. Ubiquitous. High levels in testis. Relatively high level of expression in skeletal muscle and heart. Relatively low level of expression in lung.

It is found in the endoplasmic reticulum membrane. It catalyses the reaction sn-glycerol 3-phosphate + an acyl-CoA = a 1-acyl-sn-glycero-3-phosphate + CoA. The catalysed reaction is dodecanoyl-CoA + sn-glycerol 3-phosphate = 1-dodecanoyl-sn-glycerol 3-phosphate + CoA. It carries out the reaction sn-glycerol 3-phosphate + hexadecanoyl-CoA = 1-hexadecanoyl-sn-glycero-3-phosphate + CoA. The enzyme catalyses sn-glycerol 3-phosphate + octadecanoyl-CoA = 1-octadecanoyl-sn-glycero-3-phosphate + CoA. It catalyses the reaction sn-glycerol 3-phosphate + (9Z)-octadecenoyl-CoA = 1-(9Z-octadecenoyl)-sn-glycero-3-phosphate + CoA. The catalysed reaction is (9Z,12Z)-octadecadienoyl-CoA + sn-glycerol 3-phosphate = 1-(9Z,12Z)-octadecadienoyl-sn-glycero-3-phosphate + CoA. It functions in the pathway phospholipid metabolism; CDP-diacylglycerol biosynthesis; CDP-diacylglycerol from sn-glycerol 3-phosphate: step 1/3. Inhibited by N-ethylmaleimide (NEM). Converts glycerol-3-phosphate to 1-acyl-sn-glycerol-3-phosphate (lysophosphatidic acid or LPA) by incorporating an acyl moiety at the sn-1 position of the glycerol backbone. Active against both saturated and unsaturated long-chain fatty acyl-CoAs. Protects cells against lipotoxicity. This Homo sapiens (Human) protein is Glycerol-3-phosphate acyltransferase 4.